The chain runs to 476 residues: Adenosylhomocysteinase (476 aa).

Substrate is bound by residues T67, D142, and E202. Position 203–205 (203–205 (TTT)) interacts with NAD(+). Residues K232 and D236 each contribute to the substrate site. Residues N237, 266–271 (GYGDVG), E289, N324, 345–347 (IGH), and N390 each bind NAD(+).

The protein belongs to the adenosylhomocysteinase family. Requires NAD(+) as cofactor.

It is found in the cytoplasm. It catalyses the reaction S-adenosyl-L-homocysteine + H2O = L-homocysteine + adenosine. It participates in amino-acid biosynthesis; L-homocysteine biosynthesis; L-homocysteine from S-adenosyl-L-homocysteine: step 1/1. Functionally, may play a key role in the regulation of the intracellular concentration of adenosylhomocysteine. This Prochlorococcus marinus (strain MIT 9313) protein is Adenosylhomocysteinase.